The primary structure comprises 126 residues: Holo-[acyl-carrier-protein] synthase (126 aa).

The Mg(2+) site is built by D9 and E58.

Belongs to the P-Pant transferase superfamily. AcpS family. It depends on Mg(2+) as a cofactor.

Its subcellular location is the cytoplasm. The enzyme catalyses apo-[ACP] + CoA = holo-[ACP] + adenosine 3',5'-bisphosphate + H(+). Transfers the 4'-phosphopantetheine moiety from coenzyme A to a Ser of acyl-carrier-protein. In Aliivibrio fischeri (strain MJ11) (Vibrio fischeri), this protein is Holo-[acyl-carrier-protein] synthase.